A 477-amino-acid polypeptide reads, in one-letter code: Glycogen synthase (477 aa).

K15 contacts ADP-alpha-D-glucose.

It belongs to the glycosyltransferase 1 family. Bacterial/plant glycogen synthase subfamily.

It carries out the reaction [(1-&gt;4)-alpha-D-glucosyl](n) + ADP-alpha-D-glucose = [(1-&gt;4)-alpha-D-glucosyl](n+1) + ADP + H(+). The protein operates within glycan biosynthesis; glycogen biosynthesis. Functionally, synthesizes alpha-1,4-glucan chains using ADP-glucose. This chain is Glycogen synthase, found in Escherichia coli O139:H28 (strain E24377A / ETEC).